We begin with the raw amino-acid sequence, 121 residues long: Phosphoribosyl-AMP cyclohydrolase (121 aa).

D76 lines the Mg(2+) pocket. Residue C77 participates in Zn(2+) binding. The Mg(2+) site is built by D78 and D80. C93 and C100 together coordinate Zn(2+).

It belongs to the PRA-CH family. As to quaternary structure, homodimer. Mg(2+) serves as cofactor. Requires Zn(2+) as cofactor.

The protein resides in the cytoplasm. The catalysed reaction is 1-(5-phospho-beta-D-ribosyl)-5'-AMP + H2O = 1-(5-phospho-beta-D-ribosyl)-5-[(5-phospho-beta-D-ribosylamino)methylideneamino]imidazole-4-carboxamide. The protein operates within amino-acid biosynthesis; L-histidine biosynthesis; L-histidine from 5-phospho-alpha-D-ribose 1-diphosphate: step 3/9. Functionally, catalyzes the hydrolysis of the adenine ring of phosphoribosyl-AMP. The sequence is that of Phosphoribosyl-AMP cyclohydrolase from Paracoccus denitrificans (strain Pd 1222).